Consider the following 362-residue polypeptide: DNA polymerase IV (362 aa).

In terms of domain architecture, UmuC spans 6–187 (IIHVDMDAFY…LPVSSFHGVG (182 aa)). Residues Asp-10 and Asp-105 each coordinate Mg(2+). Residue Glu-106 is part of the active site.

Belongs to the DNA polymerase type-Y family. Monomer. Mg(2+) is required as a cofactor.

It is found in the cytoplasm. The catalysed reaction is DNA(n) + a 2'-deoxyribonucleoside 5'-triphosphate = DNA(n+1) + diphosphate. Its function is as follows. Poorly processive, error-prone DNA polymerase involved in untargeted mutagenesis. Copies undamaged DNA at stalled replication forks, which arise in vivo from mismatched or misaligned primer ends. These misaligned primers can be extended by PolIV. Exhibits no 3'-5' exonuclease (proofreading) activity. May be involved in translesional synthesis, in conjunction with the beta clamp from PolIII. This is DNA polymerase IV from Leptospira interrogans serogroup Icterohaemorrhagiae serovar copenhageni (strain Fiocruz L1-130).